The sequence spans 119 residues: Ribonuclease P protein component (119 aa).

Belongs to the RnpA family. In terms of assembly, consists of a catalytic RNA component (M1 or rnpB) and a protein subunit.

It catalyses the reaction Endonucleolytic cleavage of RNA, removing 5'-extranucleotides from tRNA precursor.. RNaseP catalyzes the removal of the 5'-leader sequence from pre-tRNA to produce the mature 5'-terminus. It can also cleave other RNA substrates such as 4.5S RNA. The protein component plays an auxiliary but essential role in vivo by binding to the 5'-leader sequence and broadening the substrate specificity of the ribozyme. This Aeromonas hydrophila subsp. hydrophila (strain ATCC 7966 / DSM 30187 / BCRC 13018 / CCUG 14551 / JCM 1027 / KCTC 2358 / NCIMB 9240 / NCTC 8049) protein is Ribonuclease P protein component.